We begin with the raw amino-acid sequence, 629 residues long: Forkhead box protein O (629 aa).

A Phosphothreonine; by PKB/AKT1 modification is found at Thr49. At Ser78 the chain carries Phosphoserine. A DNA-binding region (fork-head) is located at residues 98–204 (WGNLSYADLI…ETSRYEKRRG (107 aa)). Disordered regions lie at residues 185-208 (KSVR…RAKK), 220-274 (GLND…SPIR), 321-368 (QQQF…QTLQ), 394-417 (SPNS…DSLN), and 563-597 (QHLQ…NSSL). At Ser193 the chain carries Phosphoserine; by PKB/AKT1. Composition is skewed to polar residues over residues 224 to 233 (ATPSPSSSVS) and 259 to 268 (RASSNASSCG). Ser262 bears the Phosphoserine; by PKB/AKT1 mark. Residues Ser265, Ser266, and Ser271 each carry the phosphoserine modification. The segment covering 332 to 341 (SQPPPPPYQP) has biased composition (pro residues). A compositionally biased stretch (low complexity) spans 342-356 (PQLQQQQQQQPSYSL). Over residues 394 to 403 (SPNSVTTTMS) the composition is skewed to polar residues.

In terms of assembly, interacts with melt.

It localises to the cytoplasm. The protein resides in the nucleus. Its function is as follows. Transcription factor involved in the regulation of the insulin signaling pathway. Consistently activates both the downstream target Thor\d4EBP and the feedback control target InR. Involved in negative regulation of the cell cycle, modulating cell growth and proliferation. In response to cellular stresses, such as nutrient deprivation or increased levels of reactive oxygen species, foxo is activated and inhibits growth through the action of target genes such as Thor. Foxo activated in the adult fat body can regulate lifespan in adults; an insulin peptide itself may function as one secondary messenger of insulin-regulated aging. Also regulates Lip4, homolog of human acid lipases, thereby acting as a key modulator of lipid metabolism by insulin signaling and integrates insulin responses to glucose and lipid homeostasis. This is Forkhead box protein O from Drosophila persimilis (Fruit fly).